A 148-amino-acid chain; its full sequence is Ubiquitin-conjugating enzyme E2 29 (148 aa).

Residues Met1–Leu147 enclose the UBC core domain. The Glycyl thioester intermediate role is filled by Cys85.

The protein belongs to the ubiquitin-conjugating enzyme family.

It catalyses the reaction S-ubiquitinyl-[E1 ubiquitin-activating enzyme]-L-cysteine + [E2 ubiquitin-conjugating enzyme]-L-cysteine = [E1 ubiquitin-activating enzyme]-L-cysteine + S-ubiquitinyl-[E2 ubiquitin-conjugating enzyme]-L-cysteine.. It participates in protein modification; protein ubiquitination. Functionally, accepts the ubiquitin from the E1 complex and catalyzes its covalent attachment to other proteins. This is Ubiquitin-conjugating enzyme E2 29 (UBC29) from Arabidopsis thaliana (Mouse-ear cress).